A 283-amino-acid chain; its full sequence is MSSITLQSYASRAAKQPNPAAKALLECMERKQTNLCVSIDVTNKQDLLDVCEAVGRNVCLVKTHIDIVEDFDMDLVHQLTQLSEKHDFLIFEDRKFADIGNTVSLQYSAGVHKIASWSHITNAHLVPGPSVISGLAKVGQPLGRGLLLLAEMSSEGALTKGDYTQACVDEAHKDTTGFVCGFIAMSRVDERERANTHRDLLILTPGVGLDVKGDGLGQQYRTPDQVIRESGCDVIIVGRGIYGALTTEEGKADKKAAFAKVSEQGERYKTAGWDAYLKRIGQK.

Residues Asp-40, Lys-62–His-64, Asp-93–Thr-102, Tyr-220, and Arg-239 each bind substrate. Lys-95 (proton donor) is an active-site residue.

The protein belongs to the OMP decarboxylase family.

The catalysed reaction is orotidine 5'-phosphate + H(+) = UMP + CO2. It participates in pyrimidine metabolism; UMP biosynthesis via de novo pathway; UMP from orotate: step 2/2. The sequence is that of Orotidine 5'-phosphate decarboxylase (PYR6) from Mycosarcoma maydis (Corn smut fungus).